The following is a 63-amino-acid chain: MKAKEMQEKSVAELQATLIELLREQFTLRMQKATGQLAQTHLLSQVRRNIARVKTVLNDKAGN.

The protein belongs to the universal ribosomal protein uL29 family.

This is Large ribosomal subunit protein uL29 from Marinomonas sp. (strain MWYL1).